The chain runs to 427 residues: Adenylosuccinate synthetase (427 aa).

GTP-binding positions include 12–18 and 40–42; these read GDEGKGK and GHT. Residue D13 is the Proton acceptor of the active site. 2 residues coordinate Mg(2+): D13 and G40. Residues 13-16, 38-41, T128, R142, Q223, T238, and R302 each bind IMP; these read DEGK and NAGH. H41 acts as the Proton donor in catalysis. Residue 298–304 coordinates substrate; sequence TTTGRPR. Residues R304, 330-332, and 412-414 each bind GTP; these read SID and SVG.

This sequence belongs to the adenylosuccinate synthetase family. Homodimer. It depends on Mg(2+) as a cofactor.

It is found in the cytoplasm. It catalyses the reaction IMP + L-aspartate + GTP = N(6)-(1,2-dicarboxyethyl)-AMP + GDP + phosphate + 2 H(+). Its pathway is purine metabolism; AMP biosynthesis via de novo pathway; AMP from IMP: step 1/2. Plays an important role in the de novo pathway of purine nucleotide biosynthesis. Catalyzes the first committed step in the biosynthesis of AMP from IMP. The polypeptide is Adenylosuccinate synthetase (Staphylococcus epidermidis (strain ATCC 12228 / FDA PCI 1200)).